A 116-amino-acid chain; its full sequence is MMRVVLPLCLLLASIFAWGSEAAISCNAVQANLYPCVVYVVQGGAIPYSCCNGIRMLSKQATSASDKQGVCRCIKSVVGRVSYSSIYLKKAAALPGKCGVKLPYKIDPSTNCNSIK.

The signal sequence occupies residues 1–22 (MMRVVLPLCLLLASIFAWGSEA). 4 disulfide bridges follow: Cys-26-Cys-73, Cys-36-Cys-50, Cys-51-Cys-98, and Cys-71-Cys-112.

The protein belongs to the plant LTP family.

Plant non-specific lipid-transfer proteins transfer phospholipids as well as galactolipids across membranes. May play a role in wax or cutin deposition in the cell walls of expanding epidermal cells and certain secretory tissues. This Arabidopsis thaliana (Mouse-ear cress) protein is Non-specific lipid-transfer protein 10 (LTP10).